The following is a 378-amino-acid chain: C-X-C chemokine receptor type 3-2 (378 aa).

The Extracellular portion of the chain corresponds to 1-47 (MDNSTTAAEVSAPTDYDYNSTSYDDDNPYAAPCSLTETWNFLGRFAP). 2 N-linked (GlcNAc...) asparagine glycosylation sites follow: asparagine 3 and asparagine 19. The chain crosses the membrane as a helical span at residues 48 to 68 (VAYILVFILALVGNILVLCVI). Topologically, residues 69-86 (RRYRQSRHSPCSFSLTDT) are cytoplasmic. A helical transmembrane segment spans residues 87–107 (FLLHLAVSDLLLAATLPFFAV). Residues 108 to 121 (EWISEWVFGKVMCK) are Extracellular-facing. Cysteine 120 and cysteine 199 are oxidised to a cystine. Residues 122–142 (ITGALFSLNVYCGVLFLACIS) form a helical membrane-spanning segment. Topologically, residues 143-164 (FDRYLAIVHAINISWRRKTCHA) are cytoplasmic. Residues 165–185 (QLACAFIWVICLGLSMVDMHF) traverse the membrane as a helical segment. Residues 186–212 (RDLVEIPGMNRMVCQIVYSEQYSKQWQ) are Extracellular-facing. A helical membrane pass occupies residues 213–233 (IGMQLVSMVLGFILPLLVMLY). The Cytoplasmic segment spans residues 234 to 253 (CYLHIFKALCHATRRQKRRS). Residues 254–274 (LRLIISLVIVFVISWAPYNAL) traverse the membrane as a helical segment. Residues 275–304 (RMTDSLQMLGVIVKSCALNNVLDVGILVTE) are Extracellular-facing. The helical transmembrane segment at 305 to 325 (SLGLAHCALNPLLYGLVGVKF) threads the bilayer. Residues 326 to 378 (RRELAQMCKAALGPQGCLGLVGWANGRGSSTRRPTGSFSSVETENTSYFSVMA) lie on the Cytoplasmic side of the membrane.

This sequence belongs to the G-protein coupled receptor 1 family.

The protein localises to the cell membrane. Its function is as follows. Receptor for the C-X-C chemokines cxcl11.1 and cxcl11.6. Promotes macrophage chemotaxis to sites of bacterial infection. This is C-X-C chemokine receptor type 3-2 from Danio rerio (Zebrafish).